The following is a 295-amino-acid chain: Small ribosomal subunit protein uS2 (295 aa).

Ser2 bears the N-acetylserine mark. At Ser43 the chain carries Phosphoserine. At Lys52 the chain carries N6-acetyllysine. The interaction with PPP1R16B stretch occupies residues 54–113 (TWEKLLLAARAIVAIENPADVSVISSRNTGQRAVLKFAAATGATPIAGRFTPGTFTNQIQ). The residue at position 89 (Lys89) is an N6-acetyllysine; alternate. A Glycyl lysine isopeptide (Lys-Gly) (interchain with G-Cter in SUMO2); alternate cross-link involves residue Lys89. Thr97 is modified (phosphothreonine). Laminin-binding stretches follow at residues 161–180 (IPCN…MLAR) and 205–229 (RDPE…EFQG). 5 [DE]-W-[ST] repeats span residues 230–232 (EWT), 247–249 (DWS), 266–268 (DWS), 275–277 (DWS), and 293–295 (EWS). The segment at 242–295 (QPEVADWSEGVQVPSVPIQQFPTEDWSAQPATEDWSAAPTAQATEWVGATTEWS) is laminin-binding. A disordered region spans residues 266–295 (DWSAQPATEDWSAAPTAQATEWVGATTEWS).

Belongs to the universal ribosomal protein uS2 family. In terms of assembly, monomer (37LRP) and homodimer (67LR). Component of the small ribosomal subunit. Mature ribosomes consist of a small (40S) and a large (60S) subunit. The 40S subunit contains about 33 different proteins and 1 molecule of RNA (18S). The 60S subunit contains about 49 different proteins and 3 molecules of RNA (28S, 5.8S and 5S). Interacts with RPS21. Interacts with several laminins including at least LAMB1. Interacts with MDK. Interacts with PRNP. The mature dimeric form interacts with PPP1R16B (via its fourth ankyrin repeat). Interacts with PPP1CA only in the presence of PPP1R16B. In terms of processing, acylated. Acylation may be a prerequisite for conversion of the monomeric 37 kDa laminin receptor precursor (37LRP) to the mature dimeric 67 kDa laminin receptor (67LR), and may provide a mechanism for membrane association. Post-translationally, cleaved by stromelysin-3 (ST3) at the cell surface. Cleavage by stromelysin-3 may be a mechanism to alter cell-extracellular matrix interactions.

It localises to the cell membrane. The protein localises to the cytoplasm. Its subcellular location is the nucleus. Required for the assembly and/or stability of the 40S ribosomal subunit. Required for the processing of the 20S rRNA-precursor to mature 18S rRNA in a late step of the maturation of 40S ribosomal subunits. Also functions as a cell surface receptor for laminin. Plays a role in cell adhesion to the basement membrane and in the consequent activation of signaling transduction pathways. May play a role in cell fate determination and tissue morphogenesis. Also acts as a receptor for several other ligands, including the pathogenic prion protein, viruses, and bacteria. Acts as a PPP1R16B-dependent substrate of PPP1CA. Enables malignant tumor cells to penetrate laminin tissue and vessel barriers. Activates precursor thymic anti-OFA/iLRP specific cytotoxic T-cell. May induce CD8 T-suppressor cells secreting IL-10. In Mus musculus (Mouse), this protein is Small ribosomal subunit protein uS2 (Rpsa).